A 387-amino-acid chain; its full sequence is Large ribosomal subunit protein uL3 (387 aa).

S24 carries the phosphoserine modification. K39 is covalently cross-linked (Glycyl lysine isopeptide (Lys-Gly) (interchain with G-Cter in ubiquitin)). Phosphothreonine is present on T103. K136 is covalently cross-linked (Glycyl lysine isopeptide (Lys-Gly) (interchain with G-Cter in ubiquitin)). Position 156 is a phosphoserine (S156). At H243 the chain carries Pros-methylhistidine. S297 is subject to Phosphoserine.

It belongs to the universal ribosomal protein uL3 family. As to quaternary structure, component of the large ribosomal subunit (LSU). Mature yeast ribosomes consist of a small (40S) and a large (60S) subunit. The 40S small subunit contains 1 molecule of ribosomal RNA (18S rRNA) and 33 different proteins (encoded by 57 genes). The large 60S subunit contains 3 rRNA molecules (25S, 5.8S and 5S rRNA) and 46 different proteins (encoded by 81 genes). uL3 forms together with ES39L one of the contact sites for the signal recognition particle that targets ribosomes to the endoplasmic reticulum membrane. Methylation at His-243 by HPM1 is required for proper 60S subunit assembly and promotes translational elongation fidelity.

The protein localises to the cytoplasm. Functionally, component of the ribosome, a large ribonucleoprotein complex responsible for the synthesis of proteins in the cell. The small ribosomal subunit (SSU) binds messenger RNAs (mRNAs) and translates the encoded message by selecting cognate aminoacyl-transfer RNA (tRNA) molecules. The large subunit (LSU) contains the ribosomal catalytic site termed the peptidyl transferase center (PTC), which catalyzes the formation of peptide bonds, thereby polymerizing the amino acids delivered by tRNAs into a polypeptide chain. The nascent polypeptides leave the ribosome through a tunnel in the LSU and interact with protein factors that function in enzymatic processing, targeting, and the membrane insertion of nascent chains at the exit of the ribosomal tunnel. uL3 plays a role in coordinating processes of accommodating the aminoacyl-tRNA in the PTC. In Saccharomyces cerevisiae (strain ATCC 204508 / S288c) (Baker's yeast), this protein is Large ribosomal subunit protein uL3.